The primary structure comprises 389 residues: Phospho-N-acetylmuramoyl-pentapeptide-transferase (389 aa).

10 helical membrane passes run 25-45 (RAVA…PWVI), 73-93 (TMGG…WADL), 97-117 (FIWI…VDDY), 135-155 (FWQS…VSEA), 189-209 (SMTY…VIVG), 222-242 (GLVI…AYVM), 259-279 (AGEM…FLWF), 286-306 (VFMG…IAVI), 311-331 (IVLF…MLQV), and 366-386 (QVVV…LSTL).

Belongs to the glycosyltransferase 4 family. MraY subfamily. The cofactor is Mg(2+).

Its subcellular location is the cell inner membrane. It catalyses the reaction UDP-N-acetyl-alpha-D-muramoyl-L-alanyl-gamma-D-glutamyl-meso-2,6-diaminopimeloyl-D-alanyl-D-alanine + di-trans,octa-cis-undecaprenyl phosphate = di-trans,octa-cis-undecaprenyl diphospho-N-acetyl-alpha-D-muramoyl-L-alanyl-D-glutamyl-meso-2,6-diaminopimeloyl-D-alanyl-D-alanine + UMP. It functions in the pathway cell wall biogenesis; peptidoglycan biosynthesis. Catalyzes the initial step of the lipid cycle reactions in the biosynthesis of the cell wall peptidoglycan: transfers peptidoglycan precursor phospho-MurNAc-pentapeptide from UDP-MurNAc-pentapeptide onto the lipid carrier undecaprenyl phosphate, yielding undecaprenyl-pyrophosphoryl-MurNAc-pentapeptide, known as lipid I. The sequence is that of Phospho-N-acetylmuramoyl-pentapeptide-transferase from Paraburkholderia phymatum (strain DSM 17167 / CIP 108236 / LMG 21445 / STM815) (Burkholderia phymatum).